The chain runs to 515 residues: Lysine--tRNA ligase (515 aa).

The Mg(2+) site is built by Glu422 and Glu429.

It belongs to the class-II aminoacyl-tRNA synthetase family. As to quaternary structure, homodimer. Mg(2+) serves as cofactor.

The protein localises to the cytoplasm. The catalysed reaction is tRNA(Lys) + L-lysine + ATP = L-lysyl-tRNA(Lys) + AMP + diphosphate. The sequence is that of Lysine--tRNA ligase from Clostridium acetobutylicum (strain ATCC 824 / DSM 792 / JCM 1419 / IAM 19013 / LMG 5710 / NBRC 13948 / NRRL B-527 / VKM B-1787 / 2291 / W).